Here is a 212-residue protein sequence, read N- to C-terminus: ATP-dependent dethiobiotin synthetase BioD (212 aa).

12–17 (DCGKTF) lines the ATP pocket. T16 lines the Mg(2+) pocket. K33 is a catalytic residue. S37 is a binding site for substrate. ATP-binding positions include D50, 110-113 (EGAG), and 170-171 (NC). The Mg(2+) site is built by D50 and E110.

It belongs to the dethiobiotin synthetase family. As to quaternary structure, homodimer. It depends on Mg(2+) as a cofactor.

The protein localises to the cytoplasm. The enzyme catalyses (7R,8S)-7,8-diammoniononanoate + CO2 + ATP = (4R,5S)-dethiobiotin + ADP + phosphate + 3 H(+). It participates in cofactor biosynthesis; biotin biosynthesis; biotin from 7,8-diaminononanoate: step 1/2. Functionally, catalyzes a mechanistically unusual reaction, the ATP-dependent insertion of CO2 between the N7 and N8 nitrogen atoms of 7,8-diaminopelargonic acid (DAPA, also called 7,8-diammoniononanoate) to form a ureido ring. This Legionella pneumophila subsp. pneumophila (strain Philadelphia 1 / ATCC 33152 / DSM 7513) protein is ATP-dependent dethiobiotin synthetase BioD.